We begin with the raw amino-acid sequence, 119 residues long: U9-hexatoxin-Hi1 (119 aa).

The signal sequence occupies residues 1-17; that stretch reads MKLYLVILVTSVALAAA. A propeptide spanning residues 18–53 is cleaved from the precursor; the sequence is SPTRTKEEPIEDELLEALLSVEKSLFNEETTVMEKR. Disulfide bonds link cysteine 55-cysteine 73, cysteine 66-cysteine 79, cysteine 70-cysteine 117, and cysteine 72-cysteine 88.

Belongs to the neurotoxin 03 (Tx2) family. 03 subfamily. As to expression, expressed by the venom gland.

Its subcellular location is the secreted. Functionally, probable ion channel inhibitor. In Hadronyche infensa (Fraser island funnel-web spider), this protein is U9-hexatoxin-Hi1.